The following is a 320-amino-acid chain: Cytochrome f (320 aa).

Residues 1–35 (MQNRNTFSWVKEQMTRSIFVSMMIYIITRASISNA) form the signal peptide. Heme is bound by residues Y36, C56, C59, and H60. Residues 286–306 (IQGLFLFLASVILAQIFLVLK) traverse the membrane as a helical segment.

Belongs to the cytochrome f family. As to quaternary structure, the 4 large subunits of the cytochrome b6-f complex are cytochrome b6, subunit IV (17 kDa polypeptide, petD), cytochrome f and the Rieske protein, while the 4 small subunits are PetG, PetL, PetM and PetN. The complex functions as a dimer. It depends on heme as a cofactor.

The protein resides in the plastid. It is found in the chloroplast thylakoid membrane. Component of the cytochrome b6-f complex, which mediates electron transfer between photosystem II (PSII) and photosystem I (PSI), cyclic electron flow around PSI, and state transitions. This Amborella trichopoda protein is Cytochrome f.